The sequence spans 1424 residues: ABC multidrug transporter H (1424 aa).

The disordered stretch occupies residues 1–49; that stretch reads MEDQGHLPSEPRALFDRRDDTDSTNTALDETDLSRTPLQDTSHTPHAED. The span at 23–42 shows a compositional bias: polar residues; sequence STNTALDETDLSRTPLQDTS. 2 N-linked (GlcNAc...) asparagine glycosylation sites follow: Asn-79 and Asn-275. In terms of domain architecture, ABC transporter 1 spans 96–351; it reads LSQFNIPQHI…MEEQGFVCRE (256 aa). The next 7 membrane-spanning stretches (helical) occupy residues 488-508, 520-540, 544-564, 569-589, 605-625, 629-649, and 710-730; these read GLFI…LLAM, VLIK…IAQI, IPVL…MVGL, GAFF…TALF, VSGF…PYHA, WFIW…LLSI, and NFGI…IATS. The interval 760–782 is disordered; sequence EEAQLNEKAGHKGTGTDSEAQSN. N-linked (GlcNAc...) asparagine glycans are attached at residues Asn-790 and Asn-798. The ABC transporter 2 domain occupies 794–1037; sequence FTWKNLTYTV…VKDYFARYGA (244 aa). Residue 830-837 coordinates ATP; that stretch reads GSSGAGKT. The next 4 helical transmembrane spans lie at 1131-1151, 1161-1181, 1200-1220, and 1240-1260; these read IALH…IGDS, TIFN…PLFI, VAFV…CAVL, and AIFF…QFIA. Asn-1265 is a glycosylation site (N-linked (GlcNAc...) asparagine). 2 helical membrane passes run 1268–1288 and 1300–1320; these read FAAL…GVLV and WIYW…FSVF. An N-linked (GlcNAc...) asparagine glycan is attached at Asn-1338. Residues 1395-1415 form a helical membrane-spanning segment; the sequence is TAIVCIFVLSSYALVYALMKL.

It belongs to the ABC transporter superfamily. ABCG family. PDR (TC 3.A.1.205) subfamily.

It is found in the cell membrane. The efflux inhibitor FK506 impairs the transport activity. Its function is as follows. ABC efflux transporter that is able to transport rhodamine 6G (R-6G), a known substrate for many ABC transporters, but seems not to transport azoles. The protein is ABC multidrug transporter H of Aspergillus fumigatus (strain ATCC MYA-4609 / CBS 101355 / FGSC A1100 / Af293) (Neosartorya fumigata).